A 101-amino-acid polypeptide reads, in one-letter code: Urease subunit beta (101 aa).

The protein belongs to the urease beta subunit family. In terms of assembly, heterotrimer of UreA (gamma), UreB (beta) and UreC (alpha) subunits. Three heterotrimers associate to form the active enzyme.

The protein localises to the cytoplasm. The catalysed reaction is urea + 2 H2O + H(+) = hydrogencarbonate + 2 NH4(+). Its pathway is nitrogen metabolism; urea degradation; CO(2) and NH(3) from urea (urease route): step 1/1. This is Urease subunit beta from Mesorhizobium japonicum (strain LMG 29417 / CECT 9101 / MAFF 303099) (Mesorhizobium loti (strain MAFF 303099)).